The primary structure comprises 161 residues: Multiprotein-bridging factor 1 (161 aa).

The interval 1–66 (MADDWDTVTK…RSEAGSGQFL (66 aa)) is disordered. The span at 14 to 23 (RVGGGGGGGP) shows a compositional bias: gly residues. Polar residues-rich tracts occupy residues 27 to 36 (TIKNKSQLNA) and 52 to 65 (TANS…SGQF). Residues 90 to 144 (MQNREQKKLGNRLEFGKKVGINEKDLARIEKGEVPITQDQVNRIERGLEMFIRGV) form the HTH cro/C1-type domain. The segment at residues 101–120 (RLEFGKKVGINEKDLARIEK) is a DNA-binding region (H-T-H motif).

This sequence belongs to the MBF1 family.

Its function is as follows. Transcriptional coactivator that stimulates GCN4-dependent transcriptional activity by bridging the DNA-binding region of GCN4 and TBP (SPT15), thereby recruiting TBP to GCN4-bound promoters. Involved in induction of the ribosome quality control (RQC) pathway; a pathway that degrades nascent peptide chains during problematic translation. Required to prevent stalled ribosomes from frameshifting. In Pyricularia oryzae (strain 70-15 / ATCC MYA-4617 / FGSC 8958) (Rice blast fungus), this protein is Multiprotein-bridging factor 1 (MBF1).